Here is a 305-residue protein sequence, read N- to C-terminus: Homoserine kinase (305 aa).

90-100 (PLARGLGSSAS) serves as a coordination point for ATP.

Belongs to the GHMP kinase family. Homoserine kinase subfamily.

The protein resides in the cytoplasm. It catalyses the reaction L-homoserine + ATP = O-phospho-L-homoserine + ADP + H(+). The protein operates within amino-acid biosynthesis; L-threonine biosynthesis; L-threonine from L-aspartate: step 4/5. Catalyzes the ATP-dependent phosphorylation of L-homoserine to L-homoserine phosphate. This chain is Homoserine kinase, found in Staphylococcus saprophyticus subsp. saprophyticus (strain ATCC 15305 / DSM 20229 / NCIMB 8711 / NCTC 7292 / S-41).